The sequence spans 20 residues: Protein C activator (20 aa).

Residues 1 to 20 enclose the Peptidase S1 domain; that stretch reads VVGGDECNINEHRSLALMYA.

It belongs to the peptidase S1 family. Snake venom subfamily. Monomer. Post-translationally, glycosylated. As to expression, expressed by the venom gland.

It is found in the secreted. Inhibited by calcium. Functionally, snake venom serine protease that selectively cleaves the heavy chain of protein C (PROC). This activation is thrombomodulin-independent. This is Protein C activator from Agkistrodon bilineatus (Cantil).